A 371-amino-acid chain; its full sequence is MPFLPEPLFQHGQPDRTAILLVNLGTPDGTSPREVGRYLRQFLSDPRVVEIPRAAWWFILNVLILPLRSRASAHKYETVWLREANMTGSPLLVYSERQAHALQQLLDAQGHDVVVACAMRYGNPSIPSVMQTLRKQGVERILVLPMYPQYSGTTTATAFDEVFRVMGQMRNQPELRLVKHFHDHPAYINALHQQVGAYWAQHGAPDFARGDKLLLSFHGVPRRTLELGDPYHCACLKTGRLLGEALGLQPGQYLVTFQSRFGRAEWLQPYTAPTLEELGRVGTGRVDVFCPGFPADCLETLEEIAMEGQSTFRVAGGKDFHYIPCLNDSEPWIAGLADIAQAHLQGWPLALPHPHVLEASRTRAQSKGAAA.

Fe cation-binding residues include histidine 218 and glutamate 299.

This sequence belongs to the ferrochelatase family.

It localises to the cytoplasm. It carries out the reaction heme b + 2 H(+) = protoporphyrin IX + Fe(2+). It functions in the pathway porphyrin-containing compound metabolism; protoheme biosynthesis; protoheme from protoporphyrin-IX: step 1/1. Functionally, catalyzes the ferrous insertion into protoporphyrin IX. This Ralstonia nicotianae (strain ATCC BAA-1114 / GMI1000) (Ralstonia solanacearum) protein is Ferrochelatase.